The sequence spans 302 residues: Flavin-dependent thymidylate synthase (302 aa).

Positions 43–257 (GFVRVIDYMG…PFAYKAFEDY (215 aa)) constitute a ThyX domain. Residues threonine 89, 112 to 114 (RHR), and glutamate 120 contribute to the FAD site. DUMP contacts are provided by residues 109 to 112 (QWIR), 120 to 124 (EYSAR), and arginine 196. The ThyX motif signature appears at 112-122 (RHRTANVNEYS). Residues 212–214 (DLH) and histidine 218 each bind FAD. Arginine 223 is a dUMP binding site. Arginine 223 functions as the Involved in ionization of N3 of dUMP, leading to its activation in the catalytic mechanism.

This sequence belongs to the thymidylate synthase ThyX family. As to quaternary structure, homotetramer. FAD serves as cofactor.

It catalyses the reaction dUMP + (6R)-5,10-methylene-5,6,7,8-tetrahydrofolate + NADPH + H(+) = dTMP + (6S)-5,6,7,8-tetrahydrofolate + NADP(+). It participates in pyrimidine metabolism; dTTP biosynthesis. Its function is as follows. Catalyzes the reductive methylation of 2'-deoxyuridine-5'-monophosphate (dUMP) to 2'-deoxythymidine-5'-monophosphate (dTMP) while utilizing 5,10-methylenetetrahydrofolate (mTHF) as the methyl donor, and NADPH and FADH(2) as the reductant. The polypeptide is Flavin-dependent thymidylate synthase (Ruegeria pomeroyi (strain ATCC 700808 / DSM 15171 / DSS-3) (Silicibacter pomeroyi)).